The sequence spans 368 residues: D-alanine--D-alanine ligase (368 aa).

The region spanning 151 to 358 (KKLLAAEGLP…YGTLVSTLVD (208 aa)) is the ATP-grasp domain. 179-234 (KSRLHLPVFVKPARGGSSIGITRVAEWAALDDAIAHARLHDPKVIVESGIIGREVE) serves as a coordination point for ATP. D313, E325, and N327 together coordinate Mg(2+).

Belongs to the D-alanine--D-alanine ligase family. Mg(2+) serves as cofactor. It depends on Mn(2+) as a cofactor.

It is found in the cytoplasm. It catalyses the reaction 2 D-alanine + ATP = D-alanyl-D-alanine + ADP + phosphate + H(+). It functions in the pathway cell wall biogenesis; peptidoglycan biosynthesis. Cell wall formation. In Rhodococcus jostii (strain RHA1), this protein is D-alanine--D-alanine ligase.